We begin with the raw amino-acid sequence, 479 residues long: Anaerobic nitric oxide reductase flavorubredoxin (479 aa).

The segment at 30–210 is zinc metallo-hydrolase; that stretch reads LRGSSYNSYL…PFSRLVTPKI (181 aa). Fe cation is bound by residues His79, Glu81, Asp83, His147, Asp166, and His227. The Flavodoxin-like domain occupies 254–393; the sequence is ITIFYDTMSN…LCREHGREIA (140 aa). Residues 260 to 264 and 342 to 369 each bind FMN; these read TMSNN and AFGS…EMSL. Positions 423-479 constitute a Rubredoxin-like domain; the sequence is GPRMQCSVCQWIYDPAKGEPMQDVAPGTPWSEVPDNFLCPECSLGKDVFEELASEAK. Fe cation is bound by residues Cys428, Cys431, Cys461, and Cys464.

The protein in the N-terminal section; belongs to the zinc metallo-hydrolase group 3 family. Homotetramer. Fe cation serves as cofactor. The cofactor is FMN.

The protein resides in the cytoplasm. The protein operates within nitrogen metabolism; nitric oxide reduction. In terms of biological role, anaerobic nitric oxide reductase; uses NADH to detoxify nitric oxide (NO), protecting several 4Fe-4S NO-sensitive enzymes. Has at least 2 reductase partners, only one of which (NorW, flavorubredoxin reductase) has been identified. NO probably binds to the di-iron center; electrons enter from the reductase at rubredoxin and are transferred sequentially to the FMN center and the di-iron center. Also able to function as an aerobic oxygen reductase. This Escherichia coli (strain K12 / DH10B) protein is Anaerobic nitric oxide reductase flavorubredoxin (norV).